Consider the following 76-residue polypeptide: Acyl carrier protein (76 aa).

Residues Met1–Lys76 form the Carrier domain. An O-(pantetheine 4'-phosphoryl)serine modification is found at Ser36.

This sequence belongs to the acyl carrier protein (ACP) family. 4'-phosphopantetheine is transferred from CoA to a specific serine of apo-ACP by AcpS. This modification is essential for activity because fatty acids are bound in thioester linkage to the sulfhydryl of the prosthetic group.

It localises to the cytoplasm. It participates in lipid metabolism; fatty acid biosynthesis. Carrier of the growing fatty acid chain in fatty acid biosynthesis. This is Acyl carrier protein from Helicobacter hepaticus (strain ATCC 51449 / 3B1).